We begin with the raw amino-acid sequence, 358 residues long: MSHSTHPYQKELEVATLAVKRASLLTKQLSDSIVQTAKSGTLTKDDKSPVTIGDFASQAIINHAIKLNFPNDEIVGEEDSRELQENTGLADQMLQLITKIQKETSGYNDIVGTLTDKNEVYQSIDFGNSQGGSKGRFWALDPIDGTKGFLRGDQFAVCLALIEDGKVVLGVIGCPNLSENIVSNEEHSGVVGGLYSAVKGVGSFYSELFKEGAEPLSQQKRIKMQNHTNPSQLKVVEGVEKGHSSHSTQTEIKAKFGFDSATVAKQTINLDSQVKYCVLASGQADIYLRLPVNETYREKIWDHAAGNILIYESGGQVGDVTGSPLNFGNGRTLDSKGVIAANKGIFDKVIDAVTEVRK.

The active-site Proton acceptor is the Asp54. The Mg(2+) site is built by Glu77, Asp141, Ile143, and Asp144. The Proton acceptor role is filled by Thr146. Adenosine 3',5'-bisphosphate-binding residues include Thr146, His243, Ser272, Lys275, Arg289, and Asp302. His243, Ser272, Lys275, Arg289, and Asp302 together coordinate AMP. Asp302 contacts Mg(2+).

The protein belongs to the inositol monophosphatase superfamily. The cofactor is Mg(2+).

It catalyses the reaction 3'-phosphoadenylyl sulfate + H2O = adenosine 5'-phosphosulfate + phosphate. It carries out the reaction adenosine 3',5'-bisphosphate + H2O = AMP + phosphate. The catalysed reaction is adenosine 2',5'-bisphosphate + H2O = AMP + phosphate. In terms of biological role, phosphatase that converts adenosine 3'-phosphate 5'-phosphosulfate (PAPS) to adenosine 5'-phosphosulfate (APS) and 3'(2')-phosphoadenosine 5'-phosphate (PAP) to AMP. Regulates the flux of sulfur in the sulfur-activation pathway by converting PAPS to APS. Involved in salt tolerance. This Candida albicans (strain SC5314 / ATCC MYA-2876) (Yeast) protein is 3'(2'),5'-bisphosphate nucleotidase 2 (HAL22).